Reading from the N-terminus, the 276-residue chain is Dermonecrotic toxin LsaSicTox-alphaIB2i (276 aa).

His5 is an active-site residue. Positions 25 and 27 each coordinate Mg(2+). His41 functions as the Nucleophile in the catalytic mechanism. Intrachain disulfides connect Cys45/Cys51 and Cys47/Cys190. Asp85 serves as a coordination point for Mg(2+). N-linked (GlcNAc...) asparagine glycosylation is found at Asn129 and Asn253.

This sequence belongs to the arthropod phospholipase D family. Class II subfamily. The cofactor is Mg(2+). In terms of tissue distribution, expressed by the venom gland.

It is found in the secreted. It carries out the reaction an N-(acyl)-sphingosylphosphocholine = an N-(acyl)-sphingosyl-1,3-cyclic phosphate + choline. It catalyses the reaction an N-(acyl)-sphingosylphosphoethanolamine = an N-(acyl)-sphingosyl-1,3-cyclic phosphate + ethanolamine. The enzyme catalyses a 1-acyl-sn-glycero-3-phosphocholine = a 1-acyl-sn-glycero-2,3-cyclic phosphate + choline. The catalysed reaction is a 1-acyl-sn-glycero-3-phosphoethanolamine = a 1-acyl-sn-glycero-2,3-cyclic phosphate + ethanolamine. Dermonecrotic toxins cleave the phosphodiester linkage between the phosphate and headgroup of certain phospholipids (sphingolipid and lysolipid substrates), forming an alcohol (often choline) and a cyclic phosphate. This toxin acts on sphingomyelin (SM). It may also act on ceramide phosphoethanolamine (CPE), lysophosphatidylcholine (LPC) and lysophosphatidylethanolamine (LPE), but not on lysophosphatidylserine (LPS), and lysophosphatidylglycerol (LPG). It acts by transphosphatidylation, releasing exclusively cyclic phosphate products as second products. Induces dermonecrosis, hemolysis, increased vascular permeability, edema, inflammatory response, and platelet aggregation. The chain is Dermonecrotic toxin LsaSicTox-alphaIB2i from Loxosceles sabina (Tucson recluse spider).